Reading from the N-terminus, the 253-residue chain is Eukaryotic initiation factor 4A-6 (253 aa).

A Helicase ATP-binding domain is found at 1–82; the sequence is HVVVGTPGRV…RKFMNKPVRI (82 aa). The short motif at 30–33 is the DEAD box element; it reads DEAD. Positions 93–253 constitute a Helicase C-terminal domain; sequence GIKQFYVNVD…EELPANVADL (161 aa).

It belongs to the DEAD box helicase family. eIF4A subfamily. EIF4F is a multi-subunit complex, the composition of which varies with external and internal environmental conditions. It is composed of at least EIF4A, EIF4E and EIF4G.

It carries out the reaction ATP + H2O = ADP + phosphate + H(+). Functionally, ATP-dependent RNA helicase which is a subunit of the eIF4F complex involved in cap recognition and is required for mRNA binding to ribosome. In the current model of translation initiation, eIF4A unwinds RNA secondary structures in the 5'-UTR of mRNAs which is necessary to allow efficient binding of the small ribosomal subunit, and subsequent scanning for the initiator codon. The polypeptide is Eukaryotic initiation factor 4A-6 (Nicotiana tabacum (Common tobacco)).